A 325-amino-acid polypeptide reads, in one-letter code: Ribonucleoside-diphosphate reductase small chain (325 aa).

The Fe cation site is built by Asp74, Glu105, and His108. Residue Tyr112 is part of the active site. Residues Glu168, Glu202, and His205 each coordinate Fe cation.

This sequence belongs to the ribonucleoside diphosphate reductase small chain family. In terms of assembly, heterodimer of a large and a small chain. Fe cation serves as cofactor.

It carries out the reaction a 2'-deoxyribonucleoside 5'-diphosphate + [thioredoxin]-disulfide + H2O = a ribonucleoside 5'-diphosphate + [thioredoxin]-dithiol. Its function is as follows. Ribonucleoside-diphosphate reductase holoenzyme provides the precursors necessary for viral DNA synthesis. Allows virus growth in non-dividing cells. Catalyzes the biosynthesis of deoxyribonucleotides from the corresponding ribonucleotides. In Yaba-like disease virus (YLDV), this protein is Ribonucleoside-diphosphate reductase small chain.